The chain runs to 144 residues: Small ribosomal subunit protein uS19 (144 aa).

It belongs to the universal ribosomal protein uS19 family.

In terms of biological role, protein S19 forms a complex with S13 that binds strongly to the 16S ribosomal RNA. In Aeropyrum pernix (strain ATCC 700893 / DSM 11879 / JCM 9820 / NBRC 100138 / K1), this protein is Small ribosomal subunit protein uS19 (rps19).